The chain runs to 393 residues: Putative F-box protein At1g55070 (393 aa).

Residues 29–74 (GEYFDRIPADLVIKILSKLSAKSMAKCRCVCKLLSSIIRQPNYNQL) enclose the F-box domain.

The protein is Putative F-box protein At1g55070 of Arabidopsis thaliana (Mouse-ear cress).